A 252-amino-acid polypeptide reads, in one-letter code: Low-density lipoprotein receptor-related protein 5-like protein (252 aa).

LDL-receptor class B repeat units follow at residues 3 to 45 (GHVY…NWVA), 46 to 88 (RSLY…HPEM), 89 to 132 (GLTY…DLQE), 133 to 175 (GKLY…LGDF), and 176 to 218 (IYWT…DKVV). The interval 223–247 (HADRNGGAATCASSRPTQPGLAAPS) is disordered.

The polypeptide is Low-density lipoprotein receptor-related protein 5-like protein (LRP5L) (Homo sapiens (Human)).